Here is a 496-residue protein sequence, read N- to C-terminus: Isocitrate dehydrogenase [NADP] (496 aa).

NADP(+) is bound by residues Leu-88 and Thr-90. Positions 98, 100, 104, 114, and 137 each coordinate D-threo-isocitrate. NADP(+) contacts are provided by Asn-193, Gln-229, and Lys-232. Asp-248 provides a ligand contact to Mg(2+). 7 residues coordinate NADP(+): Glu-277, Gly-281, Ser-282, Ala-283, Lys-285, Tyr-286, and Asn-293.

The protein belongs to the isocitrate and isopropylmalate dehydrogenases family. In terms of assembly, homodimer. The cofactor is Mg(2+). Mn(2+) serves as cofactor.

It carries out the reaction D-threo-isocitrate + NADP(+) = 2-oxoglutarate + CO2 + NADPH. Functionally, catalyzes the oxidative decarboxylation of isocitrate to 2-oxoglutarate and carbon dioxide with the concomitant reduction of NADP(+). In Thermus thermophilus (strain ATCC 27634 / DSM 579 / HB8), this protein is Isocitrate dehydrogenase [NADP] (icd).